The following is a 202-amino-acid chain: Recombination protein RecR (202 aa).

The C4-type zinc-finger motif lies at 61-76; it reads CARCNSFTEDEVCATC. The region spanning 84–179 is the Toprim domain; that stretch reads GLLCIVETPA…KVTRLARGVP (96 aa).

Belongs to the RecR family.

Functionally, may play a role in DNA repair. It seems to be involved in an RecBC-independent recombinational process of DNA repair. It may act with RecF and RecO. The polypeptide is Recombination protein RecR (Bordetella bronchiseptica (strain ATCC BAA-588 / NCTC 13252 / RB50) (Alcaligenes bronchisepticus)).